The sequence spans 102 residues: Small ribosomal subunit protein uS14 (102 aa).

It belongs to the universal ribosomal protein uS14 family. In terms of assembly, part of the 30S ribosomal subunit. Contacts proteins S3 and S10.

Binds 16S rRNA, required for the assembly of 30S particles and may also be responsible for determining the conformation of the 16S rRNA at the A site. The chain is Small ribosomal subunit protein uS14 from Wolbachia sp. subsp. Brugia malayi (strain TRS).